Reading from the N-terminus, the 150-residue chain is Large ribosomal subunit protein uL15 (150 aa).

Positions 1–60 (MKLSDLRPNPGANKRRKRVGRGPGSGHGKTATRGHKGQKSRSGGLKDPRRFEGGRSTTLM) are disordered. A compositionally biased stretch (basic residues) spans 30-39 (TATRGHKGQK). A compositionally biased stretch (basic and acidic residues) spans 44 to 53 (GLKDPRRFEG).

Belongs to the universal ribosomal protein uL15 family. Part of the 50S ribosomal subunit.

Functionally, binds to the 23S rRNA. This Thermus thermophilus (strain ATCC BAA-163 / DSM 7039 / HB27) protein is Large ribosomal subunit protein uL15.